A 334-amino-acid chain; its full sequence is Glycerol-3-phosphate dehydrogenase [NAD(P)+] (334 aa).

Residues Trp13, Arg33, and Lys106 each contribute to the NADPH site. The sn-glycerol 3-phosphate site is built by Lys106, Gly137, and Ser139. Ala141 is an NADPH binding site. 5 residues coordinate sn-glycerol 3-phosphate: Lys192, Asp245, Ser255, Arg256, and Asn257. Lys192 (proton acceptor) is an active-site residue. Arg256 is a binding site for NADPH. Positions 280 and 282 each coordinate NADPH.

It belongs to the NAD-dependent glycerol-3-phosphate dehydrogenase family.

The protein localises to the cytoplasm. The enzyme catalyses sn-glycerol 3-phosphate + NAD(+) = dihydroxyacetone phosphate + NADH + H(+). It carries out the reaction sn-glycerol 3-phosphate + NADP(+) = dihydroxyacetone phosphate + NADPH + H(+). It functions in the pathway membrane lipid metabolism; glycerophospholipid metabolism. Functionally, catalyzes the reduction of the glycolytic intermediate dihydroxyacetone phosphate (DHAP) to sn-glycerol 3-phosphate (G3P), the key precursor for phospholipid synthesis. The chain is Glycerol-3-phosphate dehydrogenase [NAD(P)+] from Chlamydia trachomatis serovar L2 (strain ATCC VR-902B / DSM 19102 / 434/Bu).